A 158-amino-acid chain; its full sequence is MSYTITDPSKLAYLSSAWADPNSLINLCTNSLGNQFQTQQARTTVQQQFADVWQPVPTLTSRFPAGAGYFRVYRYDPILDPLITFLMGTFDTRNRIIEVENPQNPTTTETLDATRRVDDATVAIRSAINNLLNELVRGTGMYNQVSFETISGLTWTSS.

The residue at position 2 (serine 2) is an N-acetylserine; by host.

Belongs to the virgaviridae capsid protein family.

The protein resides in the virion. Functionally, capsid protein self-assembles to form rod-shaped virions about 18 nm in diameter with a central canal enclosing the viral genomic RNA. The chain is Capsid protein (CP) from Odontoglossum ringspot virus (isolate Japan) (ORSV).